We begin with the raw amino-acid sequence, 576 residues long: Arginine--tRNA ligase (576 aa).

The short motif at 126–136 (ANPTGPMHIGH) is the 'HIGH' region element.

It belongs to the class-I aminoacyl-tRNA synthetase family. As to quaternary structure, monomer.

The protein localises to the cytoplasm. The enzyme catalyses tRNA(Arg) + L-arginine + ATP = L-arginyl-tRNA(Arg) + AMP + diphosphate. The chain is Arginine--tRNA ligase from Rickettsia peacockii (strain Rustic).